The primary structure comprises 361 residues: Phospho-N-acetylmuramoyl-pentapeptide-transferase (361 aa).

10 helical membrane-spanning segments follow: residues 25–45 (TGGA…WIIN), 72–92 (TPTM…VLWA), 95–115 (VNPY…VGFY), 133–153 (TRLL…VWLG), 169–189 (VVLN…VGAG), 200–220 (GLAI…AYLA), 240–260 (LAVL…FNAP), 264–284 (IFMG…IAVA), 289–309 (IVLA…IVQV), and 338–358 (QIVI…LATL).

The protein belongs to the glycosyltransferase 4 family. MraY subfamily. It depends on Mg(2+) as a cofactor.

The protein localises to the cell inner membrane. The catalysed reaction is UDP-N-acetyl-alpha-D-muramoyl-L-alanyl-gamma-D-glutamyl-meso-2,6-diaminopimeloyl-D-alanyl-D-alanine + di-trans,octa-cis-undecaprenyl phosphate = di-trans,octa-cis-undecaprenyl diphospho-N-acetyl-alpha-D-muramoyl-L-alanyl-D-glutamyl-meso-2,6-diaminopimeloyl-D-alanyl-D-alanine + UMP. The protein operates within cell wall biogenesis; peptidoglycan biosynthesis. Functionally, catalyzes the initial step of the lipid cycle reactions in the biosynthesis of the cell wall peptidoglycan: transfers peptidoglycan precursor phospho-MurNAc-pentapeptide from UDP-MurNAc-pentapeptide onto the lipid carrier undecaprenyl phosphate, yielding undecaprenyl-pyrophosphoryl-MurNAc-pentapeptide, known as lipid I. This Rhodopseudomonas palustris (strain BisB5) protein is Phospho-N-acetylmuramoyl-pentapeptide-transferase.